Reading from the N-terminus, the 201-residue chain is MQSSPLLENLIEHLRCLPGVGPKSAQRMAYHLLQRDRSGGMNLAGALTEAMSKIGHCTHCRTFTEEESCAICNNPRRQNSGFLCVVEQPSDIPAIEQTGQFSGRYFVLMGHLSPLDGIGPKEIGLDLLQKRLQHESFYEVILATNPTVEGEATANYIAEMCFQHNIKVSRIAHGIPIGGELETVDGTTLSHSLIGRREIQL.

The C4-type zinc-finger motif lies at 57-72 (CTHCRTFTEEESCAIC). Residues 81 to 176 (GFLCVVEQPS…KVSRIAHGIP (96 aa)) form the Toprim domain.

Belongs to the RecR family.

Its function is as follows. May play a role in DNA repair. It seems to be involved in an RecBC-independent recombinational process of DNA repair. It may act with RecF and RecO. The chain is Recombination protein RecR from Histophilus somni (strain 129Pt) (Haemophilus somnus).